The chain runs to 581 residues: 4-hydroxy-3-methylbut-2-en-1-yl diphosphate synthase (flavodoxin) (581 aa).

Positions 489, 492, 523, and 530 each coordinate [4Fe-4S] cluster.

The protein belongs to the IspG family. [4Fe-4S] cluster is required as a cofactor.

The enzyme catalyses (2E)-4-hydroxy-3-methylbut-2-enyl diphosphate + oxidized [flavodoxin] + H2O + 2 H(+) = 2-C-methyl-D-erythritol 2,4-cyclic diphosphate + reduced [flavodoxin]. It participates in isoprenoid biosynthesis; isopentenyl diphosphate biosynthesis via DXP pathway; isopentenyl diphosphate from 1-deoxy-D-xylulose 5-phosphate: step 5/6. Its function is as follows. Converts 2C-methyl-D-erythritol 2,4-cyclodiphosphate (ME-2,4cPP) into 1-hydroxy-2-methyl-2-(E)-butenyl 4-diphosphate. In Porphyromonas gingivalis (strain ATCC BAA-308 / W83), this protein is 4-hydroxy-3-methylbut-2-en-1-yl diphosphate synthase (flavodoxin).